We begin with the raw amino-acid sequence, 409 residues long: O-methyltransferase pyiA (409 aa).

Residues M1–P21 show a composition bias toward polar residues. The segment at M1–E46 is disordered. D271 contributes to the S-adenosyl-L-methionine binding site. H317 (proton acceptor) is an active-site residue.

It belongs to the class I-like SAM-binding methyltransferase superfamily. Cation-independent O-methyltransferase family.

It participates in mycotoxin biosynthesis. O-methyltransferase; part of the gene cluster that mediates the biosynthesis of the mycotoxin pyrichalasin H, a tyrosine-derived cytochalasan that inhibits the growth of rice seedlings, but also inhibits lymphocyte capping and actin polymerization and alters cell morphology. Pyrichalasin H is indicated as the responsible agent for the genus-specific pathogenicity of M.grisea toward crabgrass. The first step in the pathway is catalyzed by the O-methyltransferase pyiA which methylates free tyrosine to generate the precursor O-methyltyrosine. The hybrid PKS-NRPS pyiS, assisted by the enoyl reductase pyiC, are responsible for fusion of the O-methyltyrosine precursor and the polyketide backbone. The polyketide synthase module (PKS) of pyiS is responsible for the synthesis of the polyketide backbone and the downstream nonribosomal peptide synthetase (NRPS) amidates the carboxyl end of the polyketide with the O-methyltyrosine precursor. As the NRPS A-domain demonstrates substrate tolerance, pyiS can also use phenylalanine, tyrosine and even para-chlorophenylalanine as amino acid precursor, which leads to the production of novel cytochalasans, including halogenated cytochalasans. Because pyiS lacks a designated enoylreductase (ER) domain, the required activity is provided the enoyl reductase pyiC. Reduction by the hydrolyase pyiE leads to 1,5-dihydropyrrolone, which is substrate for dehydration and intra-molecular Diels-Alder cyclization by the Diels-Alderase pyiF to yield the required isoindolone-fused macrocycle. The tailoring cytochrome P450 monooxygenases piyD and piyG catalyze the hydroxylation at C-18 and C-7, respectivily, whereas the short-chain dehydrogenase/reductase pyiH reduces the carbonyl at C-21 in preparation for the transfer of an acetyl group by the acetyltransferase pyiB. These 3 reactions whose order is not clear yet, lead to the production of O-methylpyrichalasin J, a deacetylated pyrichalasin H. Finally, pyiB to converts O-methylpyrichalasin J into the final product pyrichalasin H via acetylation of C-21. In Pyricularia grisea (Crabgrass-specific blast fungus), this protein is O-methyltransferase pyiA.